Consider the following 181-residue polypeptide: DNA-packaging protein NU1 homolog (181 aa).

It to phage lambda DNA packaging protein NU1.

This is DNA-packaging protein NU1 homolog (nohD) from Escherichia coli (strain K12).